The sequence spans 469 residues: Chromosomal replication initiator protein DnaA (469 aa).

The segment at Met-1–Lys-83 is domain I, interacts with DnaA modulators. The domain II stretch occupies residues Lys-83–Pro-128. Residues Asp-89–Arg-131 form a disordered region. Positions Asp-129–Thr-344 are domain III, AAA+ region. ATP-binding residues include Gly-173, Gly-175, Lys-176, and Thr-177. Residues Glu-345–Lys-469 are domain IV, binds dsDNA.

It belongs to the DnaA family. In terms of assembly, oligomerizes as a right-handed, spiral filament on DNA at oriC.

The protein resides in the cytoplasm. Its function is as follows. Plays an essential role in the initiation and regulation of chromosomal replication. ATP-DnaA binds to the origin of replication (oriC) to initiate formation of the DNA replication initiation complex once per cell cycle. Binds the DnaA box (a 9 base pair repeat at the origin) and separates the double-stranded (ds)DNA. Forms a right-handed helical filament on oriC DNA; dsDNA binds to the exterior of the filament while single-stranded (ss)DNA is stabiized in the filament's interior. The ATP-DnaA-oriC complex binds and stabilizes one strand of the AT-rich DNA unwinding element (DUE), permitting loading of DNA polymerase. After initiation quickly degrades to an ADP-DnaA complex that is not apt for DNA replication. Binds acidic phospholipids. This chain is Chromosomal replication initiator protein DnaA, found in Treponema denticola (strain ATCC 35405 / DSM 14222 / CIP 103919 / JCM 8153 / KCTC 15104).